The chain runs to 550 residues: Chaperonin GroEL (550 aa).

Residues 30–33 (TLGP), Lys51, 87–91 (DGTTT), Gly415, 478–480 (NAA), and Asp494 contribute to the ATP site.

This sequence belongs to the chaperonin (HSP60) family. As to quaternary structure, forms a cylinder of 14 subunits composed of two heptameric rings stacked back-to-back. Interacts with the co-chaperonin GroES.

Its subcellular location is the cytoplasm. It catalyses the reaction ATP + H2O + a folded polypeptide = ADP + phosphate + an unfolded polypeptide.. In terms of biological role, together with its co-chaperonin GroES, plays an essential role in assisting protein folding. The GroEL-GroES system forms a nano-cage that allows encapsulation of the non-native substrate proteins and provides a physical environment optimized to promote and accelerate protein folding. The sequence is that of Chaperonin GroEL from Desulfosudis oleivorans (strain DSM 6200 / JCM 39069 / Hxd3) (Desulfococcus oleovorans).